Here is a 142-residue protein sequence, read N- to C-terminus: Hemoglobin subunit alpha (142 aa).

A Globin domain is found at 2-142; sequence VLSAADKNNV…VSTVLTSKYR (141 aa). Ser4 is subject to Phosphoserine. Lys8 and Lys12 each carry N6-succinyllysine. Lys17 carries the post-translational modification N6-acetyllysine; alternate. Lys17 carries the post-translational modification N6-succinyllysine; alternate. Position 25 is a phosphotyrosine (Tyr25). Position 36 is a phosphoserine (Ser36). An N6-succinyllysine modification is found at Lys41. Ser50 carries the post-translational modification Phosphoserine. His59 provides a ligand contact to O2. His88 provides a ligand contact to heme b. Thr109 carries the post-translational modification Phosphothreonine. A phosphoserine mark is found at Ser125 and Ser132. 2 positions are modified to phosphothreonine: Thr135 and Thr138. Ser139 carries the phosphoserine modification.

Belongs to the globin family. As to quaternary structure, heterotetramer of two alpha chains and two beta chains. As to expression, red blood cells.

In terms of biological role, involved in oxygen transport from the lung to the various peripheral tissues. Its function is as follows. Hemopressin acts as an antagonist peptide of the cannabinoid receptor CNR1. Hemopressin-binding efficiently blocks cannabinoid receptor CNR1 and subsequent signaling. The polypeptide is Hemoglobin subunit alpha (HBA) (Cavia porcellus (Guinea pig)).